The primary structure comprises 178 residues: uncharacterized protein (178 aa).

Belongs to the tail fiber family.

This is an uncharacterized protein from Escherichia coli (strain K12).